Consider the following 278-residue polypeptide: Shikimate dehydrogenase (NADP(+)) (278 aa).

Shikimate-binding positions include Ser15–Ser17 and Thr62. The active-site Proton acceptor is Lys66. Glu78 provides a ligand contact to NADP(+). Shikimate contacts are provided by Asn87 and Asp102. NADP(+)-binding positions include Gly127–Ala131, Asn151–Lys156, and Ile217. Tyr219 contributes to the shikimate binding site. Gly240 lines the NADP(+) pocket.

It belongs to the shikimate dehydrogenase family. In terms of assembly, homodimer.

It carries out the reaction shikimate + NADP(+) = 3-dehydroshikimate + NADPH + H(+). The protein operates within metabolic intermediate biosynthesis; chorismate biosynthesis; chorismate from D-erythrose 4-phosphate and phosphoenolpyruvate: step 4/7. Involved in the biosynthesis of the chorismate, which leads to the biosynthesis of aromatic amino acids. Catalyzes the reversible NADPH linked reduction of 3-dehydroshikimate (DHSA) to yield shikimate (SA). The protein is Shikimate dehydrogenase (NADP(+)) of Bacillus licheniformis (strain ATCC 14580 / DSM 13 / JCM 2505 / CCUG 7422 / NBRC 12200 / NCIMB 9375 / NCTC 10341 / NRRL NRS-1264 / Gibson 46).